A 28-amino-acid polypeptide reads, in one-letter code: uncharacterized protein (28 aa).

This is an uncharacterized protein from Archaeoglobus fulgidus (strain ATCC 49558 / DSM 4304 / JCM 9628 / NBRC 100126 / VC-16).